The sequence spans 1049 residues: MGSSDEAGSSKHHRRDKEKDRERSSSRHHRDRDRERSSSRHHHREDRDDDRDRDRDRERRHREKERDREERKAREREEREKEKERERARRREERDREERSRRREAAAEEEEEDVDRDRKRRRRSSHHHHHHRDAEPEGPASGAREEEVVDVEEAERRRQKKKEEEQKQLDEEMETRRRRIKEWQEMKRREEETKRREQEEAGVGTSAAAAAAPAEAEDGGNAGKKWTLDGEESDEEGNQEDGKKSDDNGGSGAGAMDVDVPNGGDNANGANAMDEDEIDPLDAFMNSMVLPEVAKLESMPAANVDDKNDKSAKDAVTNGDKKGPKKVMGRIIQGEDSDSDYADDEDDEGGSEDEDDEEFMKRVKKTKAEKLAIVDHSKIDYQPFRKNFYIEVKDITKMAAEEVAAYRKQLELKVHGKDVPKPIKTWVQSGLTSKLLDTIKKLGFEKPMSIQAQALPIIMSGRDCIGIAKTGSGKTLAFVLPMLRHVKDQPAVVPGDGPIGLIMAPTRELVVQIHSDIKKFSKALGINCVAIYGGSGVAQQISELKRGAEIVVCTPGRMIDILCTSSGKITNLRRVTFLVMDEADRMFDMGFEPQITRIVQNTRPDRQTVLFSATFPRQVEILARKVLTKPVEIQVGGRSVVNKDITQLVEVRPENERFFRLLELLGEWFDKGKILVFVHSQDKCDSLLKDLFQHGYPCLSLHGGKDQTDRESTLADFKSNVCSLLIATSVAARGLDVKELELVVNYDVPNHYEDYVHRVGRTGRAGRKGFAVTFISEEEERYAPDLVKALELSEQAVPEDLKGLADRFMAKVKQGTEQAHGTGYGGSGFKFNEEEDEARKSAKKAQAREYGYEEDKSDSDSDEEGGVRKAGGDLAAQAIAAAQAAAAMVAAKAASNANQQTQGTSVGPLLPLAIASNTQNNEATARALQAAFNIQQNLARIQAHAVPEHYEAELEINDFPQNARWKITHKETLGPIQEWTGAAITTRGTFFPQGKIVGANERKLYLFIEGPTELSVKKAKAELKRVLEDCANHALNLPGSAQTGKYSVI.

Disordered regions lie at residues 1-279 and 299-358; these read MGSS…DEID and MPAA…DDEE. Basic and acidic residues predominate over residues 64 to 106; it reads KERDREERKAREREEREKEKERERARRREERDREERSRRREAA. Basic residues predominate over residues 118-131; the sequence is RKRRRRSSHHHHHH. 2 stretches are compositionally biased toward basic and acidic residues: residues 161–170 and 181–199; these read KKEEEQKQLD and KEWQEMKRREEETKRREQE. Low complexity predominate over residues 201–214; the sequence is AGVGTSAAAAAAPA. Positions 229–239 are enriched in acidic residues; sequence DGEESDEEGNQ. Positions 262–272 are enriched in low complexity; it reads NGGDNANGANA. Positions 304–313 are enriched in basic and acidic residues; it reads VDDKNDKSAK. Over residues 335–358 the composition is skewed to acidic residues; that stretch reads EDSDSDYADDEDDEGGSEDEDDEE. Positions 424 to 452 match the Q motif motif; the sequence is KTWVQSGLTSKLLDTIKKLGFEKPMSIQA. The Helicase ATP-binding domain maps to 455–633; it reads LPIIMSGRDC…RKVLTKPVEI (179 aa). 468–475 contacts ATP; it reads AKTGSGKT. The DEAD box motif lies at 581-584; that stretch reads DEAD. One can recognise a Helicase C-terminal domain in the interval 644-805; that stretch reads DITQLVEVRP…AVPEDLKGLA (162 aa). Residues 816 to 868 are disordered; the sequence is TEQAHGTGYGGSGFKFNEEEDEARKSAKKAQAREYGYEEDKSDSDSDEEGGVR. A compositionally biased stretch (acidic residues) spans 855 to 864; sequence DKSDSDSDEE. Positions 1012-1037 form a coiled coil; that stretch reads TELSVKKAKAELKRVLEDCANHALNL.

The protein belongs to the DEAD box helicase family. DDX46/PRP5 subfamily.

It carries out the reaction ATP + H2O = ADP + phosphate + H(+). The chain is DEAD-box ATP-dependent RNA helicase 42 from Oryza sativa subsp. japonica (Rice).